A 209-amino-acid chain; its full sequence is Ribose 1,5-bisphosphate phosphokinase PhnN (209 aa).

27-34 (GPSGGGKD) is a binding site for ATP.

Belongs to the ribose 1,5-bisphosphokinase family.

The catalysed reaction is alpha-D-ribose 1,5-bisphosphate + ATP = 5-phospho-alpha-D-ribose 1-diphosphate + ADP. The protein operates within metabolic intermediate biosynthesis; 5-phospho-alpha-D-ribose 1-diphosphate biosynthesis; 5-phospho-alpha-D-ribose 1-diphosphate from D-ribose 5-phosphate (route II): step 3/3. Functionally, catalyzes the phosphorylation of ribose 1,5-bisphosphate to 5-phospho-D-ribosyl alpha-1-diphosphate (PRPP). The protein is Ribose 1,5-bisphosphate phosphokinase PhnN of Chelativorans sp. (strain BNC1).